The following is a 411-amino-acid chain: Adenylosuccinate synthetase (411 aa).

GTP contacts are provided by residues glycine 11 to lysine 17 and glycine 39 to threonine 41. Catalysis depends on aspartate 12, which acts as the Proton acceptor. Residues aspartate 12 and glycine 39 each coordinate Mg(2+). IMP-binding positions include aspartate 12–lysine 15, asparagine 37–histidine 40, threonine 121, arginine 135, glutamine 215, threonine 230, and arginine 294. Residue histidine 40 is the Proton donor of the active site. Threonine 290 to arginine 296 lines the substrate pocket. GTP-binding positions include arginine 296, lysine 322–aspartate 324, and serine 400–serine 402.

The protein belongs to the adenylosuccinate synthetase family. Homodimer. Mg(2+) serves as cofactor.

It is found in the cytoplasm. The enzyme catalyses IMP + L-aspartate + GTP = N(6)-(1,2-dicarboxyethyl)-AMP + GDP + phosphate + 2 H(+). The protein operates within purine metabolism; AMP biosynthesis via de novo pathway; AMP from IMP: step 1/2. Plays an important role in the de novo pathway of purine nucleotide biosynthesis. Catalyzes the first committed step in the biosynthesis of AMP from IMP. This Helicobacter pylori (strain Shi470) protein is Adenylosuccinate synthetase.